Reading from the N-terminus, the 117-residue chain is LIM and senescent cell antigen-like-containing domain protein 3 (117 aa).

The LIM zinc-binding domain maps to 70 to 117 (ATCERCKGGFAPAETIVNSNGELYHEQCFVCAQCFQQFPEGLFYEERT).

In terms of tissue distribution, detected in testis.

It is found in the cytoplasm. The chain is LIM and senescent cell antigen-like-containing domain protein 3 (LIMS3) from Homo sapiens (Human).